A 491-amino-acid chain; its full sequence is Chromosomal replication initiator protein DnaA (491 aa).

The interval 1 to 69 (MTTWDKCLKK…TIQECHGNDL (69 aa)) is domain I, interacts with DnaA modulators. The domain II stretch occupies residues 69–154 (LIIEYSNKKF…KEDEEYSFGL (86 aa)). The segment at 155-371 (PLKEKYVFDS…GALNRVLTTS (217 aa)) is domain III, AAA+ region. ATP contacts are provided by Gly-199, Gly-201, Lys-202, and Thr-203. Residues 372 to 491 (KFNHKDPTIE…YELLLNKISR (120 aa)) form a domain IV, binds dsDNA region.

It belongs to the DnaA family. Oligomerizes as a right-handed, spiral filament on DNA at oriC.

Its subcellular location is the cytoplasm. In terms of biological role, plays an essential role in the initiation and regulation of chromosomal replication. ATP-DnaA binds to the origin of replication (oriC) to initiate formation of the DNA replication initiation complex once per cell cycle. Binds the DnaA box (a 9 base pair repeat at the origin) and separates the double-stranded (ds)DNA. Forms a right-handed helical filament on oriC DNA; dsDNA binds to the exterior of the filament while single-stranded (ss)DNA is stabiized in the filament's interior. The ATP-DnaA-oriC complex binds and stabilizes one strand of the AT-rich DNA unwinding element (DUE), permitting loading of DNA polymerase. After initiation quickly degrades to an ADP-DnaA complex that is not apt for DNA replication. Binds acidic phospholipids. The chain is Chromosomal replication initiator protein DnaA from Francisella tularensis subsp. tularensis (strain WY96-3418).